The primary structure comprises 95 residues: MLHTLHRSPWLTDFAALLRLLSEGDELLLLQDGVTAAVDGNRYLESLRNAPIKVYALNEDLIARGLTGQISNDIILIDYTDFVRLTVKHPSQMAW.

It belongs to the DsrH/TusB family. In terms of assembly, heterohexamer, formed by a dimer of trimers. The hexameric TusBCD complex contains 2 copies each of TusB, TusC and TusD. The TusBCD complex interacts with TusE.

The protein resides in the cytoplasm. Functionally, part of a sulfur-relay system required for 2-thiolation of 5-methylaminomethyl-2-thiouridine (mnm(5)s(2)U) at tRNA wobble positions. The chain is Protein TusB from Escherichia coli (strain K12 / MC4100 / BW2952).